The following is a 355-amino-acid chain: Adenine deaminase (355 aa).

Residues H24, H26, and H204 each contribute to the Zn(2+) site. E207 serves as the catalytic Proton donor. Residue D285 coordinates Zn(2+). Substrate is bound at residue D286.

This sequence belongs to the metallo-dependent hydrolases superfamily. Adenosine and AMP deaminases family. Adenine deaminase type 2 subfamily. The cofactor is Zn(2+).

The catalysed reaction is adenine + H2O + H(+) = hypoxanthine + NH4(+). In terms of biological role, catalyzes the hydrolytic deamination of adenine to hypoxanthine. Plays an important role in the purine salvage pathway and in nitrogen catabolism. The polypeptide is Adenine deaminase (Geotalea uraniireducens (strain Rf4) (Geobacter uraniireducens)).